A 275-amino-acid chain; its full sequence is Ammonia transport outward protein 3 (275 aa).

The Extracellular portion of the chain corresponds to Met-1 to Phe-84. At Ser-4 the chain carries Phosphoserine. A helical membrane pass occupies residues Ala-85–Ile-105. Over Asn-106 to Ser-120 the chain is Cytoplasmic. Residues Leu-121–Gly-141 traverse the membrane as a helical segment. The Extracellular portion of the chain corresponds to Asp-142 to Asn-181. Residues Val-182–Leu-202 traverse the membrane as a helical segment. Residues Lys-203 to Gly-207 lie on the Cytoplasmic side of the membrane. A helical transmembrane segment spans residues Leu-208–Ile-228. Topologically, residues Asp-229 to Ala-236 are extracellular. A helical membrane pass occupies residues Gly-237–Val-257. At Ser-258–Pro-275 the chain is on the cytoplasmic side.

It belongs to the acetate uptake transporter (AceTr) (TC 2.A.96) family.

It localises to the cell membrane. Functionally, transporter protein required for ammonia export. Induced in rho(0) cells, probably to eliminate the excess ammonia that arises because of a potential defect in ammonia assimilation in those cells. The protein is Ammonia transport outward protein 3 (ATO3) of Saccharomyces cerevisiae (strain ATCC 204508 / S288c) (Baker's yeast).